Here is a 344-residue protein sequence, read N- to C-terminus: Heat-inducible transcription repressor HrcA (344 aa).

It belongs to the HrcA family.

Its function is as follows. Negative regulator of class I heat shock genes (grpE-dnaK-dnaJ and groELS operons). Prevents heat-shock induction of these operons. This chain is Heat-inducible transcription repressor HrcA, found in Streptococcus pneumoniae (strain P1031).